Here is a 152-residue protein sequence, read N- to C-terminus: Transcriptional repressor NrdR (152 aa).

The segment at cysteine 3–cysteine 34 is a zinc-finger region. The ATP-cone domain maps to leucine 48–glutamate 138.

This sequence belongs to the NrdR family. Requires Zn(2+) as cofactor.

Its function is as follows. Negatively regulates transcription of bacterial ribonucleotide reductase nrd genes and operons by binding to NrdR-boxes. The chain is Transcriptional repressor NrdR from Chlamydia pneumoniae (Chlamydophila pneumoniae).